Consider the following 473-residue polypeptide: Glycine receptor subunit beta-type 4 (473 aa).

The N-terminal stretch at 1–19 (MHSLFLKILIYSLMQCVLG) is a signal peptide. Topologically, residues 20 to 249 (QAEFWDYDEN…EFHVDREITH (230 aa)) are extracellular. N-linked (GlcNAc...) asparagine glycosylation is found at Asn-29, Asn-105, and Asn-151. An intrachain disulfide couples Cys-166 to Cys-180. Residues 250 to 271 (HIIQSYIPTSLIVIISWFSFWL) traverse the membrane as a helical segment. The Cytoplasmic portion of the chain corresponds to 272 to 276 (DVEAV). A helical membrane pass occupies residues 277-297 (PGRVSLSITTLLTLATQSSAA). Residues 298–308 (RMALPQASDVK) lie on the Extracellular side of the membrane. The helical transmembrane segment at 309–329 (AIDVWMGTCMAFVFSAMIEFT) threads the bilayer. Over 330 to 439 (VVNYCVRRKV…NRKNAQKIDR (110 aa)) the chain is Cytoplasmic. Residues 440-460 (YSRALFPLAFIIFNIFYWIYY) traverse the membrane as a helical segment. The Extracellular segment spans residues 461-473 (LKYAGSNSPELLL).

The protein belongs to the ligand-gated ion channel (TC 1.A.9) family. Glycine receptor (TC 1.A.9.3) subfamily. In terms of assembly, pentamer.

The protein resides in the postsynaptic cell membrane. The protein localises to the synapse. It localises to the cell membrane. Its function is as follows. Glycine receptors are ligand-gated chloride channels. Channel opening is triggered by extracellular glycine. Contributes to the generation of inhibitory postsynaptic currents. In Caenorhabditis elegans, this protein is Glycine receptor subunit beta-type 4.